The following is a 218-amino-acid chain: MGQKINPLGFRLGTTQSHHSLWFAQPKKYSEGLEEDKKIRDCIKKYVQKNIRISSGMEGIARIEIQKRIDLIQIIIYMGFPKLLIEDKPRRVEELQMNVQKELNCVNRKLNIAITRISNPYGDPNILAEFIAGQLKNRVSFRKAMKKAIELTEQANTKGIQVQIAGRIDGKEIARVEWIREGRVPLQTIEAKIDYCSYTVRTIYGVLGIKIWIFVDEE.

In terms of domain architecture, KH type-2 spans 47–118 (VQKNIRISSG…KLNIAITRIS (72 aa)).

The protein belongs to the universal ribosomal protein uS3 family. Part of the 30S ribosomal subunit.

It localises to the plastid. The protein resides in the chloroplast. This is Small ribosomal subunit protein uS3c (rps3) from Lepidium virginicum (Virginia pepperweed).